A 408-amino-acid polypeptide reads, in one-letter code: NADH-quinone oxidoreductase subunit D (408 aa).

This sequence belongs to the complex I 49 kDa subunit family. As to quaternary structure, NDH-1 is composed of 14 different subunits. Subunits NuoB, C, D, E, F, and G constitute the peripheral sector of the complex.

The protein resides in the cell inner membrane. It carries out the reaction a quinone + NADH + 5 H(+)(in) = a quinol + NAD(+) + 4 H(+)(out). Its function is as follows. NDH-1 shuttles electrons from NADH, via FMN and iron-sulfur (Fe-S) centers, to quinones in the respiratory chain. The immediate electron acceptor for the enzyme in this species is believed to be ubiquinone. Couples the redox reaction to proton translocation (for every two electrons transferred, four hydrogen ions are translocated across the cytoplasmic membrane), and thus conserves the redox energy in a proton gradient. The polypeptide is NADH-quinone oxidoreductase subunit D (Campylobacter hominis (strain ATCC BAA-381 / DSM 21671 / CCUG 45161 / LMG 19568 / NCTC 13146 / CH001A)).